A 223-amino-acid chain; its full sequence is Probable glutathione S-transferase (223 aa).

Positions 2–81 (AEVKLLGFWY…YIDETFEGPS (80 aa)) constitute a GST N-terminal domain. Residues Ser-12, Lys-39, Val-53, and 65–66 (ES) contribute to the glutathione site. Positions 86-212 (DPYDRALARF…ELLAFFRARF (127 aa)) constitute a GST C-terminal domain.

Belongs to the GST superfamily. HSP26 family. Root tip-specific expression.

The catalysed reaction is RX + glutathione = an S-substituted glutathione + a halide anion + H(+). In Nicotiana tabacum (Common tobacco), this protein is Probable glutathione S-transferase.